A 503-amino-acid polypeptide reads, in one-letter code: Transmembrane prolyl 4-hydroxylase (503 aa).

Positions 1 to 49 (MAAAVATVQRPEAETVEEASNLQWPLPPEHRPSGAATRPGDSEDAPVRP) are disordered. The Cytoplasmic segment spans residues 1-61 (MAAAVATVQR…KPRGICSRAY (61 aa)). A helical; Signal-anchor for type II membrane protein membrane pass occupies residues 62–82 (FLVLMVFVHLYLGNVLALLLF). Over 83–503 (VHYSNGDEST…RAYSDARVEL (421 aa)) the chain is Lumenal. The interval 90–110 (ESTDPGPQRREQSPQPVPTLG) is disordered. 2 EF-hand domains span residues 186 to 221 (AMQV…GNGR) and 225 to 260 (PENI…DFHK). Residues Asp199, Asn201, Asp203, Arg205, Glu210, Asp238, Asp240, Asp242, and Glu249 each contribute to the Ca(2+) site. In terms of domain architecture, Fe2OG dioxygenase spans 310-461 (EFSEPLQVVR…KWIANNWINV (152 aa)). Fe cation-binding residues include His329 and Asp331. Asn349 and Asn369 each carry an N-linked (GlcNAc...) asparagine glycan. Residue Glu375 coordinates Fe cation. An N-linked (GlcNAc...) asparagine glycan is attached at Asn383. Residue Lys452 coordinates 2-oxoglutarate.

In terms of assembly, homodimer. It depends on Fe(2+) as a cofactor. L-ascorbate is required as a cofactor. Post-translationally, glycosylated. Highest expression levels are detected in the eye and brain, especially in the retinal epithelium cells and cortical neurons. Also expressed in skeletal muscle, lung, heart, adrenal gland, kidney, prostate, thyroid and testis.

The protein localises to the endoplasmic reticulum membrane. It catalyses the reaction L-prolyl-[hypoxia-inducible factor alpha subunit] + 2-oxoglutarate + O2 = trans-4-hydroxy-L-prolyl-[hypoxia-inducible factor alpha subunit] + succinate + CO2. Functionally, catalyzes the post-translational formation of 4-hydroxyproline in hypoxia-inducible factor (HIF) alpha proteins. Hydroxylates HIF1A at 'Pro-402' and 'Pro-564'. May function as a cellular oxygen sensor and, under normoxic conditions, may target HIF through the hydroxylation for proteasomal degradation via the von Hippel-Lindau ubiquitination complex. This Mus musculus (Mouse) protein is Transmembrane prolyl 4-hydroxylase (P4htm).